Consider the following 171-residue polypeptide: MKKLLFSTFLLVLGSTSAAHANLGYVNLKRCLEESDLGKKETEELEAMKQQFVKNAEKIEEELTSIYNKLQDEDYMESLSDSASEELRKKFEDLSGEYNAYQSQYYQSINQSNVKRIQKLIQEVKIAAESVRSKEKLEAILNEEAVLAIAPGTDKTTEIIAILNESFKKQN.

The signal sequence occupies residues 1–21; it reads MKKLLFSTFLLVLGSTSAAHA.

This sequence belongs to the Skp family.

In Chlamydia pneumoniae (Chlamydophila pneumoniae), this protein is Skp-like protein.